Consider the following 55-residue polypeptide: UPF0391 membrane protein RSp1666 (55 aa).

A run of 2 helical transmembrane segments spans residues 5–25 (AVIF…GIAA) and 33–53 (ILFM…LVAG).

This sequence belongs to the UPF0391 family.

The protein localises to the cell membrane. The protein is UPF0391 membrane protein RSp1666 of Ralstonia nicotianae (strain ATCC BAA-1114 / GMI1000) (Ralstonia solanacearum).